The following is a 1653-amino-acid chain: Protein TOPAZ1 (1653 aa).

Disordered regions lie at residues 1 to 94 (MRPP…TDLV), 284 to 303 (YSVE…KSGK), and 415 to 442 (ISST…SETE). Over residues 63–78 (GREETEGDKLAKENGK) the composition is skewed to basic and acidic residues. A compositionally biased stretch (basic and acidic residues) spans 423 to 442 (SDGHHMEKRSPRGDLRSETE).

In terms of tissue distribution, restricted to testis, where it localizes to germ cells.

It localises to the cytoplasm. It is found in the cytosol. Its function is as follows. Important for normal spermatogenesis and male fertility. Specifically required for progression to the post-meiotic stages of spermatocyte development. Seems to be necessary for normal expression levels of a number of testis-expressed gene transcripts, although its role in this process is unclear. The chain is Protein TOPAZ1 from Mus musculus (Mouse).